A 229-amino-acid chain; its full sequence is Transcriptional activator protein YukR (229 aa).

The HTH luxR-type domain maps to 157-222 (DTSGKGILSP…QAIRLGVELE (66 aa)). Residues 181 to 200 (YPEIALIAGITTRTVKHHMG) constitute a DNA-binding region (H-T-H motif).

Belongs to the autoinducer-regulated transcriptional regulatory protein family.

Its function is as follows. Probable transcriptional activator. Binds to an autoinducer molecule. The chain is Transcriptional activator protein YukR (yukR) from Yersinia ruckeri.